Here is a 651-residue protein sequence, read N- to C-terminus: Mitochondrial sodium/calcium exchanger protein (651 aa).

Residues 51–71 form a helical membrane-spanning segment; the sequence is VILIILGILYLIILFVIMSSI. The Cytoplasmic segment spans residues 72-91; that stretch reads ADDFFCPAISGIVSHLRMSE. A helical membrane pass occupies residues 92 to 112; that stretch reads SIAGVTFLAFGNGAPDVFSSI. The Extracellular portion of the chain corresponds to 113–126; it reads SSVLTTPKPKADLA. A helical membrane pass occupies residues 127 to 147; sequence LGDLFGTSIFVTTVVLAIIIF. Residues 148–161 are Cytoplasmic-facing; sequence TKSFKVAIIPTLRD. Residues 162–182 traverse the membrane as a helical segment; the sequence is LIFYMTTLAFIVFCFLKFDKI. Position 183 (glutamate 183) is a topological domain, extracellular. A helical membrane pass occupies residues 184 to 204; sequence VWMPATFLGIYGVYVVTVIIL. Residues 205–398 lie on the Cytoplasmic side of the membrane; the sequence is GIYRTHRKKR…PSRDEFSEMN (194 aa). Residues 399-419 traverse the membrane as a helical segment; the sequence is IFIKIVTVIKVVPVFFFKLTV. The Extracellular segment spans residues 420 to 428; the sequence is PSNEMSWCK. A helical transmembrane segment spans residues 429 to 449; sequence PLFILHCFASIQFALFSIQII. Topologically, residues 450–458 are cytoplasmic; it reads TLKPFDGSP. The helical transmembrane segment at 459-479 threads the bilayer; it reads GLWLYGLGFSAILAMVAMYFL. Over 480-486 the chain is Extracellular; sequence PLSKEQK. Residues 487–507 form a helical membrane-spanning segment; sequence YYKEIYSYLGFLMSIAWIYAT. Topologically, residues 508-510 are cytoplasmic; it reads SNE. Residues 511–531 form a helical membrane-spanning segment; that stretch reads IVSVVTMIGVVTGLSMELLGL. At 532–559 the chain is on the extracellular side; that stretch reads TIMAWSNCIGDIVADIAVVKQGYPKMAM. Residues 560–580 traverse the membrane as a helical segment; it reads AAAIGGPLFNLLIGFGLPFTI. Over 581–595 the chain is Cytoplasmic; that stretch reads AAAQGKEMELLINPV. The chain crosses the membrane as a helical span at residues 596–616; the sequence is YRLLMLFLGISLVTTFVALFI. Residues 617–626 are Extracellular-facing; that stretch reads QRFTVRRPHA. The helical transmembrane segment at 627–647 threads the bilayer; sequence VLLIFIFVVFLIFICLAEFHV. The Cytoplasmic segment spans residues 648-651; the sequence is LEWN.

The protein belongs to the Ca(2+):cation antiporter (CaCA) (TC 2.A.19) family. SLC24A subfamily. As to expression, expressed in the seam cells of the organism. Expression is visible in the seam cells across all larval stages, and expression persists into the adult stage of the organism.

The protein resides in the mitochondrion inner membrane. Inhibited by the sodium/calcium exchanger inhibitor CGP-37157. Its function is as follows. Mitochondrial sodium/calcium antiporter that mediates sodium-dependent calcium efflux from mitochondrion, thereby acting as a key regulator of mitochondrion calcium homeostasis. Required for patterning of neural circuits: functions in the same pathway as RAC-dependent effectors of the unc-6/netrin signaling pathway to set left/ right patterning of the VD/DD GABAergic circuit. The sequence is that of Mitochondrial sodium/calcium exchanger protein from Caenorhabditis elegans.